A 499-amino-acid chain; its full sequence is Catalase (499 aa).

A disordered region spans residues 1 to 25 (MTDRPIMTTSAGAPIPDNQNSLTAG). Over residues 7–23 (MTTSAGAPIPDNQNSLT) the composition is skewed to polar residues. Catalysis depends on residues histidine 55 and asparagine 127. Tyrosine 337 serves as a coordination point for heme.

Belongs to the catalase family. As to quaternary structure, homotetramer. Heme is required as a cofactor.

The protein localises to the periplasm. It catalyses the reaction 2 H2O2 = O2 + 2 H2O. Its function is as follows. Decomposes hydrogen peroxide into water and oxygen; serves to protect cells from the toxic effects of hydrogen peroxide. This chain is Catalase (katA), found in Brucella abortus biovar 1 (strain 9-941).